A 207-amino-acid chain; its full sequence is Cytochrome c biogenesis ATP-binding export protein CcmA (207 aa).

The region spanning 4-207 (LEARELLCER…RISLTQTGAA (204 aa)) is the ABC transporter domain. 36 to 43 (GSNGAGKT) lines the ATP pocket.

This sequence belongs to the ABC transporter superfamily. CcmA exporter (TC 3.A.1.107) family. As to quaternary structure, the complex is composed of two ATP-binding proteins (CcmA) and two transmembrane proteins (CcmB).

It is found in the cell inner membrane. The catalysed reaction is heme b(in) + ATP + H2O = heme b(out) + ADP + phosphate + H(+). Functionally, part of the ABC transporter complex CcmAB involved in the biogenesis of c-type cytochromes; once thought to export heme, this seems not to be the case, but its exact role is uncertain. Responsible for energy coupling to the transport system. This Escherichia coli (strain UTI89 / UPEC) protein is Cytochrome c biogenesis ATP-binding export protein CcmA.